The sequence spans 32 residues: Lectin (32 aa).

Belongs to the leguminous lectin family. In terms of assembly, homotetramer.

Its function is as follows. Metalloglycoprotein, containing Ca, Mg, Mn, and Zn and the carbohydrates galactose, glucosamine, mannose, and fucose. It agglutinates erythrocytes of blood group A1. The protein is Lectin of Macrotyloma axillare (Perennial horse gram).